The primary structure comprises 572 residues: Proteinaceous RNase P 1, chloroplastic/mitochondrial (572 aa).

The N-terminal 70 residues, 1-70, are a transit peptide targeting the chloroplast and mitochondrion; that stretch reads MLRLTCFTPS…SRHLCTLPLA (70 aa). PPR repeat units follow at residues 96-130, 136-174, 175-209, and 210-244; these read PEAL…GVQL, NVLL…KVVP, NEAT…GIQP, and RLRS…EVVP. Residues 338–565 form the PRORP domain; the sequence is MDENGVCKCC…DLQTSRQWLC (228 aa). Positions 344 and 347 each coordinate Zn(2+). Positions 399, 474, 475, and 493 each coordinate Mn(2+). Zn(2+) is bound by residues histidine 548 and cysteine 565.

This sequence belongs to the PPR family. P subfamily. Mg(2+) serves as cofactor. The cofactor is Mn(2+).

It is found in the mitochondrion. It localises to the plastid. Its subcellular location is the chloroplast. The catalysed reaction is Endonucleolytic cleavage of RNA, removing 5'-extranucleotides from tRNA precursor.. Functionally, endonuclease RNase P responsible for the 5' maturation of tRNA precursors. Preferentially cleaves at the unusual cleavage site, but also able to cleave at the classical cleavage site. Also involved in the maturation of mRNAs in mitochondria. In Arabidopsis thaliana (Mouse-ear cress), this protein is Proteinaceous RNase P 1, chloroplastic/mitochondrial (PRORP1).